We begin with the raw amino-acid sequence, 503 residues long: Aspartyl/glutamyl-tRNA(Asn/Gln) amidotransferase subunit B (503 aa).

It belongs to the GatB/GatE family. GatB subfamily. In terms of assembly, heterotrimer of A, B and C subunits.

It carries out the reaction L-glutamyl-tRNA(Gln) + L-glutamine + ATP + H2O = L-glutaminyl-tRNA(Gln) + L-glutamate + ADP + phosphate + H(+). It catalyses the reaction L-aspartyl-tRNA(Asn) + L-glutamine + ATP + H2O = L-asparaginyl-tRNA(Asn) + L-glutamate + ADP + phosphate + 2 H(+). Functionally, allows the formation of correctly charged Asn-tRNA(Asn) or Gln-tRNA(Gln) through the transamidation of misacylated Asp-tRNA(Asn) or Glu-tRNA(Gln) in organisms which lack either or both of asparaginyl-tRNA or glutaminyl-tRNA synthetases. The reaction takes place in the presence of glutamine and ATP through an activated phospho-Asp-tRNA(Asn) or phospho-Glu-tRNA(Gln). This Mycobacterium avium (strain 104) protein is Aspartyl/glutamyl-tRNA(Asn/Gln) amidotransferase subunit B.